A 420-amino-acid polypeptide reads, in one-letter code: D-tagatose-1,6-bisphosphate aldolase subunit GatZ (420 aa).

It belongs to the GatZ/KbaZ family. GatZ subfamily. Forms a complex with GatY.

It participates in carbohydrate metabolism; D-tagatose 6-phosphate degradation; D-glyceraldehyde 3-phosphate and glycerone phosphate from D-tagatose 6-phosphate: step 2/2. In terms of biological role, component of the tagatose-1,6-bisphosphate aldolase GatYZ that is required for full activity and stability of the Y subunit. Could have a chaperone-like function for the proper and stable folding of GatY. When expressed alone, GatZ does not show any aldolase activity. Is involved in the catabolism of galactitol. The sequence is that of D-tagatose-1,6-bisphosphate aldolase subunit GatZ from Escherichia coli O139:H28 (strain E24377A / ETEC).